A 462-amino-acid chain; its full sequence is Elongation factor 1-alpha 1 (462 aa).

The residue at position 2 (glycine 2) is a N,N,N-trimethylglycine. In terms of domain architecture, tr-type G spans 5–242 (KTHINIVVIG…DCILPPTRPT (238 aa)). The G1 stretch occupies residues 14–21 (GHVDSGKS). 14 to 21 (GHVDSGKS) lines the GTP pocket. Lysine 36 carries the post-translational modification N6,N6,N6-trimethyllysine; alternate. An N6,N6-dimethyllysine; alternate modification is found at lysine 36. The residue at position 36 (lysine 36) is an N6-methyllysine; alternate. The residue at position 55 (lysine 55) is an N6,N6-dimethyllysine. The tract at residues 70-74 (GITID) is G2. Lysine 79 bears the N6,N6,N6-trimethyllysine; by EEF1AKMT1 mark. The tract at residues 91–94 (DAPG) is G3. GTP is bound at residue 153-156 (NKMD). The tract at residues 153-156 (NKMD) is G4. Lysine 165 is modified (N6,N6,N6-trimethyllysine; alternate; by EEF1AKMT3). Lysine 165 is modified (N6,N6-dimethyllysine; alternate; by EEF1AKMT3). Position 165 is an N6-acetyllysine; alternate (lysine 165). An N6-methyllysine; alternate; by EEF1AKMT3 modification is found at lysine 165. Residue lysine 172 is modified to N6-acetyllysine. Residue 194 to 196 (SGW) coordinates GTP. The tract at residues 194–196 (SGW) is G5. At lysine 273 the chain carries N6-acetyllysine. Serine 300 bears the Phosphoserine; by TGFBR1 mark. The residue at position 301 (glutamate 301) is a 5-glutamyl glycerylphosphorylethanolamine. Lysine 318 is subject to N6,N6,N6-trimethyllysine; by EEF1AKMT2. Glutamate 374 carries the 5-glutamyl glycerylphosphorylethanolamine modification. Residue lysine 385 forms a Glycyl lysine isopeptide (Lys-Gly) (interchain with G-Cter in ubiquitin) linkage. Lysine 392 is subject to N6-acetyllysine; alternate. Lysine 392 carries the post-translational modification N6-succinyllysine; alternate. Threonine 432 carries the post-translational modification Phosphothreonine; by PASK. Lysine 439 carries the N6-acetyllysine modification.

Belongs to the TRAFAC class translation factor GTPase superfamily. Classic translation factor GTPase family. EF-Tu/EF-1A subfamily. Found in a nuclear export complex with XPO5, EEF1A1, Ran and aminoacylated tRNA. Interacts with PARP1 and TXK. Interacts with KARS1. May interact with ERGIC2. Interacts with IFIT1 (via TPR repeats 4-7). Interacts with DLC1, facilitating distribution to the membrane periphery and ruffles upon growth factor stimulation. Interacts with ZPR1; the interaction occurs in a epidermal growth factor (EGF)-dependent manner. Interacts with PPP1R16B. Interacts with SPHK1 and SPHK2; both interactions increase SPHK1 and SPHK2 kinase activity. Interacts with guanyl-nucleotide exchange factor EEF1B2. Interacts (via middle-region) with HTATIP2 (via N-terminus); the interaction is direct and competes with EEF1A1 binding to guanyl-nucleotide exchange factor EEF1B2, thereby inhibiting GDP for GTP exchange and reactivation of EEF1A1. Interacts with tRNA. ISGylated. Post-translationally, phosphorylated by TXK. Phosphorylation by PASK increases translation efficiency. Phosphorylated by ROCK2. Phosphorylation by TGFBR1 inhibits translation elongation. In terms of processing, trimethylated at Lys-79 by EEF1AKMT1. Methylated at Lys-165 by EEF1AKMT3, methylation by EEF1AKMT3 is dynamic as well as inducible by stress conditions, such as ER-stress, and plays a regulatory role on mRNA translation. Trimethylated at Lys-318 by EEF1AKMT2. Mono-, di-, and trimethylated at Lys-36 by EEF1AKMT4; trimethylated form is predominant. Methylation by EEF1AKMT4 contributes to the fine-tuning of translation rates for a subset of tRNAs. Trimethylated at Gly-2 by METTL13. Mono- and dimethylated at Lys-55 by METTL13; dimethylated form is predominant. Ubiquitinated at Lys-385 by RNF14 in response to ribosome collisions (ribosome stalling), leading to its degradation by the proteasome and rescue of stalled ribosomes.

The protein localises to the cytoplasm. Its subcellular location is the nucleus. The protein resides in the nucleolus. It is found in the cell membrane. It carries out the reaction GTP + H2O = GDP + phosphate + H(+). Functionally, translation elongation factor that catalyzes the GTP-dependent binding of aminoacyl-tRNA (aa-tRNA) to the A-site of ribosomes during the elongation phase of protein synthesis. Base pairing between the mRNA codon and the aa-tRNA anticodon promotes GTP hydrolysis, releasing the aa-tRNA from EEF1A1 and allowing its accommodation into the ribosome. The growing protein chain is subsequently transferred from the P-site peptidyl tRNA to the A-site aa-tRNA, extending it by one amino acid through ribosome-catalyzed peptide bond formation. Also plays a role in the positive regulation of IFNG transcription in T-helper 1 cells as part of an IFNG promoter-binding complex with TXK and PARP1. Also plays a role in cytoskeleton organization by promoting actin bundling. This Equus caballus (Horse) protein is Elongation factor 1-alpha 1 (EEF1A1).